Reading from the N-terminus, the 297-residue chain is Cyclin-dependent kinase 1 (297 aa).

In terms of domain architecture, Protein kinase spans 4 to 287 (FEKIEKIGEG…AKDILEHPYF (284 aa)). ATP is bound by residues 10-18 (IGEGTYGVV) and K33. At T14 the chain carries Phosphothreonine. Residue Y15 is modified to Phosphotyrosine. The active-site Proton acceptor is D128. Y160 carries the post-translational modification Phosphotyrosine. T161 is subject to Phosphothreonine; by CAK.

It belongs to the protein kinase superfamily. CMGC Ser/Thr protein kinase family. CDC2/CDKX subfamily. In terms of assembly, forms a stable but non-covalent complex with a regulatory subunit and with a cyclin. Component of the Frs-CycA-Cdk1 complex composed of Cdk1, CycA and Z600.

It localises to the nucleus. The catalysed reaction is L-seryl-[protein] + ATP = O-phospho-L-seryl-[protein] + ADP + H(+). The enzyme catalyses L-threonyl-[protein] + ATP = O-phospho-L-threonyl-[protein] + ADP + H(+). It catalyses the reaction [DNA-directed RNA polymerase] + ATP = phospho-[DNA-directed RNA polymerase] + ADP + H(+). With respect to regulation, phosphorylation at Thr-14 or Tyr-15 inactivates the enzyme, while phosphorylation at Thr-161 activates it. Its function is as follows. Plays a key role in the control of the eukaryotic cell cycle. Required for entry into S-phase and mitosis. In embryos, promotes the release of Rif1 from chromatin during mid-blastula transition. p34 is a component of the kinase complex that phosphorylates the repetitive C-terminus of RNA polymerase II. This is Cyclin-dependent kinase 1 from Drosophila melanogaster (Fruit fly).